A 339-amino-acid chain; its full sequence is Ketol-acid reductoisomerase (NADP(+)) (339 aa).

In terms of domain architecture, KARI N-terminal Rossmann spans 1–182 (MRVYYDSDAD…GGGRAGIIET (182 aa)). NADP(+) contacts are provided by residues 24–27 (YGSQ), Arg48, Ser51, and 83–86 (DEGQ). His108 is an active-site residue. Gly134 contacts NADP(+). The region spanning 183-328 (TFKEECETDL…EKLRAMMPWI (146 aa)) is the KARI C-terminal knotted domain. Asp191, Glu195, Glu227, and Glu231 together coordinate Mg(2+). Residue Ser252 participates in substrate binding.

It belongs to the ketol-acid reductoisomerase family. It depends on Mg(2+) as a cofactor.

The enzyme catalyses (2R)-2,3-dihydroxy-3-methylbutanoate + NADP(+) = (2S)-2-acetolactate + NADPH + H(+). It carries out the reaction (2R,3R)-2,3-dihydroxy-3-methylpentanoate + NADP(+) = (S)-2-ethyl-2-hydroxy-3-oxobutanoate + NADPH + H(+). Its pathway is amino-acid biosynthesis; L-isoleucine biosynthesis; L-isoleucine from 2-oxobutanoate: step 2/4. The protein operates within amino-acid biosynthesis; L-valine biosynthesis; L-valine from pyruvate: step 2/4. In terms of biological role, involved in the biosynthesis of branched-chain amino acids (BCAA). Catalyzes an alkyl-migration followed by a ketol-acid reduction of (S)-2-acetolactate (S2AL) to yield (R)-2,3-dihydroxy-isovalerate. In the isomerase reaction, S2AL is rearranged via a Mg-dependent methyl migration to produce 3-hydroxy-3-methyl-2-ketobutyrate (HMKB). In the reductase reaction, this 2-ketoacid undergoes a metal-dependent reduction by NADPH to yield (R)-2,3-dihydroxy-isovalerate. The protein is Ketol-acid reductoisomerase (NADP(+)) of Acidiphilium cryptum (strain JF-5).